Reading from the N-terminus, the 366-residue chain is Leucine-rich repeat-containing protein 58 (366 aa).

At serine 19 the chain carries Phosphoserine. 9 LRR repeats span residues 40–61 (ALLR…LGGG), 64–86 (HLQL…LTLS), 87–108 (GLRT…PKGL), 116–138 (SLQV…LELR), 139–161 (ALQT…ENLR), 162–184 (SLEC…ANLP), 185–206 (SLNY…LSQL), 208–229 (SLRS…ILNL), and 231–251 (HLEE…RDLT). The span at 337–346 (ASHSSTSQSE) shows a compositional bias: low complexity. Residues 337 to 356 (ASHSSTSQSESDSEDEASVA) are disordered.

The polypeptide is Leucine-rich repeat-containing protein 58 (Lrrc58) (Mus musculus (Mouse)).